The following is a 331-amino-acid chain: Ornithine carbamoyltransferase (331 aa).

Residues 55 to 58, Q82, R106, and 133 to 136 contribute to the carbamoyl phosphate site; these read STRT and HPTQ. L-ornithine is bound by residues N166, D230, and 234-235; that span reads SM. Carbamoyl phosphate is bound by residues 272–273 and R317; that span reads CL.

This sequence belongs to the aspartate/ornithine carbamoyltransferase superfamily. OTCase family.

The protein localises to the cytoplasm. The enzyme catalyses carbamoyl phosphate + L-ornithine = L-citrulline + phosphate + H(+). The protein operates within amino-acid biosynthesis; L-arginine biosynthesis; L-arginine from L-ornithine and carbamoyl phosphate: step 1/3. Reversibly catalyzes the transfer of the carbamoyl group from carbamoyl phosphate (CP) to the N(epsilon) atom of ornithine (ORN) to produce L-citrulline. The polypeptide is Ornithine carbamoyltransferase (argF) (Neisseria gonorrhoeae).